The following is a 369-amino-acid chain: DNA replication and repair protein RecF (369 aa).

Residue 30 to 37 participates in ATP binding; the sequence is GINAQGKT.

It belongs to the RecF family.

The protein resides in the cytoplasm. The RecF protein is involved in DNA metabolism; it is required for DNA replication and normal SOS inducibility. RecF binds preferentially to single-stranded, linear DNA. It also seems to bind ATP. The protein is DNA replication and repair protein RecF of Macrococcus caseolyticus (strain JCSC5402) (Macrococcoides caseolyticum).